Reading from the N-terminus, the 112-residue chain is K(+)/H(+) antiporter modulator KhtS (112 aa).

Positions 42–64 are disordered; it reads YVPMSSYPQETQSAKTPSPGSMH. Residues 47-60 show a composition bias toward polar residues; that stretch reads SYPQETQSAKTPSP.

The protein localises to the cell membrane. Functionally, modulates the activity of the potassium/proton antiporter KhtU. Involved in protection of the cell from methylglyoxal, a toxic by-product of glycolysis. The chain is K(+)/H(+) antiporter modulator KhtS from Bacillus subtilis (strain 168).